The primary structure comprises 538 residues: Retinoblastoma-binding protein 5 (538 aa).

WD repeat units follow at residues 22 to 63 (DCIS…KIIS) and 64 to 103 (AHIHPVCSLCWSRDGHKLVSASTDNIVSQWDVLSGDCDQR). Lys129 participates in a covalent cross-link: Glycyl lysine isopeptide (Lys-Gly) (interchain with G-Cter in SUMO2). 4 WD repeats span residues 148 to 188 (DDDS…LVAS), 196 to 235 (SNTTAIKSIEFARKGSCFLINTADRIIRVYDGREILTCGR), 249 to 291 (VNRT…KILH), and 293 to 331 (TRGELLLDVAWHPVRPIIASISSGVVSIWAQNQVENWSA). Thr252 bears the Phosphothreonine; by CDK1 mark. Positions 330 to 366 (SAFAPDFKELDENVEYEERESEFDIEDEDKSEPEQTG) are interaction with ASH2L. The span at 344 to 360 (EYEERESEFDIEDEDKS) shows a compositional bias: acidic residues. The disordered stretch occupies residues 344–377 (EYEERESEFDIEDEDKSEPEQTGADAAEDEEVDV). Ser350 is subject to Phosphoserine. Residues 371 to 380 (EDEEVDVTSV) form an interaction with WDR5 region. A phosphoserine mark is found at Ser388 and Ser389. The segment at 408–519 (VEDPEENPYG…LPLEGSTKGK (112 aa)) is disordered. Basic residues predominate over residues 479–490 (SKKKQAGRPKGS). A compositionally biased stretch (basic and acidic residues) spans 491–510 (KGKEKDSPFKPKLYKGDRGL). Position 497 is a phosphoserine; by CDK1 (Ser497). Ser525 is modified (phosphoserine).

In terms of assembly, component of the SET1 complex, at least composed of the catalytic subunit (SETD1A or SETD1B), WDR5, WDR82, RBBP5, ASH2L/ASH2, CXXC1/CFP1, HCFC1 and DPY30. Core component of several methyltransferase-containing complexes including MLL1/MLL, MLL2/3 (also named ASCOM complex) and MLL4/WBP7. Each complex is at least composed of ASH2L, RBBP5, WDR5, DPY30, one or more specific histone methyltransferases (KMT2A/MLL1, KMT2D/MLL2, KMT2C/MLL3 and KMT2B/MLL4), and the facultative components PAGR1, BACC1, CHD8, E2F6, HCFC1, HCFC2, HSP70, INO80C, KDM6A, KANSL1, LAS1L, MAX, MCRS1, MEN1, MGA, MYST1/MOF, NCOA6, PAXIP1/PTIP, PELP1, PHF20, PRP31, RING2, RUVB1/TIP49A, RUVB2/TIP49B, SENP3, TAF1, TAF4, TAF6, TAF7, TAF9, TEX10 and alpha- and beta-tubulin. Component of a histone methylation complex composed of at least ZNF335, RBBP5, ASH2L and WDR5; the complex may have histone H3-specific methyltransferase activity, however does not have specificity for 'Lys-4' of histone H3. Interacts with ZNF335. Interacts with ASH2L; the interaction is direct. Interacts with WDR5; the interaction is direct. Components of the ZNF335-RBBP5-ASH2L-WDR5 histone methylation complex may associate with components of a nuclear receptor-mediated transcription complex to form a complex at least composed of ZNF335, HCFC1, CCAR2, EMSY, MKI67, RBBP5, ASH2L and WDR5. Within this complex interacts with EMSY. Found in a complex with RBBP5, ASH2L, DPY30, KMT2A, KMT2D and WDR5. Interacts with SETD1A. Interacts with WDR82.

It is found in the nucleus. Functionally, in embryonic stem (ES) cells, plays a crucial role in the differentiation potential, particularly along the neural lineage, regulating gene induction and H3 'Lys-4' methylation at key developmental loci, including that mediated by retinoic acid. Does not affect ES cell self-renewal. Component or associated component of some histone methyltransferase complexes which regulates transcription through recruitment of those complexes to gene promoters. As part of the MLL1/MLL complex, involved in mono-, di- and trimethylation at 'Lys-4' of histone H3. Histone H3 'Lys-4' methylation represents a specific tag for epigenetic transcriptional activation. In association with ASH2L and WDR5, stimulates the histone methyltransferase activities of KMT2A, KMT2B, KMT2C, KMT2D, SETD1A and SETD1B. The sequence is that of Retinoblastoma-binding protein 5 (Rbbp5) from Mus musculus (Mouse).